A 57-amino-acid polypeptide reads, in one-letter code: Small hydrophobic protein (57 aa).

The Virion surface portion of the chain corresponds to 1–8 (MPAIQPPL). Residues 9-29 (YLTFLLLILLYLIITLYVWTI) traverse the membrane as a helical segment. At 30-57 (LTITYKTTVRYAALYQRSFSRWGFDQSL) the chain is on the intravirion side.

It belongs to the rubulavirus small hydrophobic protein family. Interacts with host TNFRSF1A, RIPK1 and IRAK1; these interactions interfere with host NF-kappa-B activation at the level of receptor complexes. Interacts with host protein UBQLN4.

The protein localises to the virion membrane. The protein resides in the host cell membrane. Plays a role in the inhibition of the host NF-kappa-B pathway. This inhibition occurs at the receptor level, by preventing the signaling of TNFR1 as well as IL-1R and TLR3. This Homo sapiens (Human) protein is Small hydrophobic protein (SH).